A 33-amino-acid polypeptide reads, in one-letter code: Brevinin-2HSa (33 aa).

A disulfide bond links C27 and C33.

As to expression, expressed by the skin glands.

Its subcellular location is the secreted. Functionally, has antibacterial activity against the Gram-positive bacterium S.aureus ATCC 25923 (MIC=18 uM) and the Gram-negative bacterium E.coli ATCC 25726 (MIC=36 uM). This chain is Brevinin-2HSa, found in Odorrana hosii (Hose's rock frog).